Here is a 78-residue protein sequence, read N- to C-terminus: D-alanyl carrier protein (78 aa).

Residues 1–77 form the Carrier domain; sequence MDLKEQIVEI…KVVAKVESLI (77 aa). O-(pantetheine 4'-phosphoryl)serine is present on Ser-35.

Belongs to the DltC family. 4'-phosphopantetheine is transferred from CoA to a specific serine of apo-DCP.

The protein resides in the cytoplasm. The protein operates within cell wall biogenesis; lipoteichoic acid biosynthesis. Its function is as follows. Carrier protein involved in the D-alanylation of lipoteichoic acid (LTA). The loading of thioester-linked D-alanine onto DltC is catalyzed by D-alanine--D-alanyl carrier protein ligase DltA. The DltC-carried D-alanyl group is further transferred to cell membrane phosphatidylglycerol (PG) by forming an ester bond, probably catalyzed by DltD. D-alanylation of LTA plays an important role in modulating the properties of the cell wall in Gram-positive bacteria, influencing the net charge of the cell wall. This chain is D-alanyl carrier protein, found in Leuconostoc mesenteroides subsp. mesenteroides (strain ATCC 8293 / DSM 20343 / BCRC 11652 / CCM 1803 / JCM 6124 / NCDO 523 / NBRC 100496 / NCIMB 8023 / NCTC 12954 / NRRL B-1118 / 37Y).